The following is a 103-amino-acid chain: Glutaredoxin-C1 (103 aa).

Residues 1–102 form the Glutaredoxin domain; sequence MDRVNRLAAQ…PLLRNAGALW (102 aa). A disulfide bridge links cysteine 21 with cysteine 24.

This sequence belongs to the glutaredoxin family. CC-type subfamily.

The protein resides in the cytoplasm. Has a glutathione-disulfide oxidoreductase activity in the presence of NADPH and glutathione reductase. Reduces low molecular weight disulfides and proteins. This is Glutaredoxin-C1 (GRXC1) from Oryza sativa subsp. japonica (Rice).